The following is a 383-amino-acid chain: Putative glutamate--cysteine ligase 2-2 (383 aa).

Belongs to the glutamate--cysteine ligase type 2 family. YbdK subfamily.

It catalyses the reaction L-cysteine + L-glutamate + ATP = gamma-L-glutamyl-L-cysteine + ADP + phosphate + H(+). Functionally, ATP-dependent carboxylate-amine ligase which exhibits weak glutamate--cysteine ligase activity. The polypeptide is Putative glutamate--cysteine ligase 2-2 (Legionella pneumophila (strain Lens)).